Consider the following 463-residue polypeptide: Probable diacyglycerol O-acyltransferase tgs1 (463 aa).

The Proton acceptor role is filled by H137.

Belongs to the long-chain O-acyltransferase family.

It catalyses the reaction an acyl-CoA + a 1,2-diacyl-sn-glycerol = a triacyl-sn-glycerol + CoA. Its pathway is glycerolipid metabolism; triacylglycerol biosynthesis. Catalyzes the terminal and only committed step in triacylglycerol synthesis by using diacylglycerol and fatty acyl CoA as substrates. Required for storage lipid synthesis. The sequence is that of Probable diacyglycerol O-acyltransferase tgs1 (tgs1) from Mycobacterium tuberculosis (strain CDC 1551 / Oshkosh).